Consider the following 910-residue polypeptide: Chitin synthase A (910 aa).

The segment at 56 to 156 is disordered; it reads NYHDDYDPRP…EPAPTPTPAP (101 aa). 2 stretches are compositionally biased toward basic and acidic residues: residues 57–84 and 130–148; these read YHDD…HHDA and DPHD…HDEP. The next 9 helical transmembrane spans lie at 366–386, 448–468, 583–603, 620–640, 655–675, 701–721, 730–750, 828–848, and 876–896; these read WFFQ…IDAG, SAFG…YVAL, VYQT…FLVF, VLFI…FILS, MVYF…FITV, TLII…IIFL, FIQY…YAFC, GVVL…LQAG, and LYSV…FLVV.

Belongs to the chitin synthase family. Class I subfamily.

The protein localises to the cell membrane. The catalysed reaction is [(1-&gt;4)-N-acetyl-beta-D-glucosaminyl](n) + UDP-N-acetyl-alpha-D-glucosamine = [(1-&gt;4)-N-acetyl-beta-D-glucosaminyl](n+1) + UDP + H(+). In terms of biological role, polymerizes chitin, a structural polymer of the cell wall and septum, by transferring the sugar moiety of UDP-GlcNAc to the non-reducing end of the growing chitin polymer. The sequence is that of Chitin synthase A (CHSA) from Ampelomyces quisqualis (Powdery mildew agent).